The following is a 245-amino-acid chain: NAD(P)H-quinone oxidoreductase subunit K (245 aa).

[4Fe-4S] cluster is bound by residues Cys58, Cys59, Cys123, and Cys154.

This sequence belongs to the complex I 20 kDa subunit family. In terms of assembly, NDH-1 can be composed of about 15 different subunits; different subcomplexes with different compositions have been identified which probably have different functions. [4Fe-4S] cluster is required as a cofactor.

It is found in the cellular thylakoid membrane. It catalyses the reaction a plastoquinone + NADH + (n+1) H(+)(in) = a plastoquinol + NAD(+) + n H(+)(out). It carries out the reaction a plastoquinone + NADPH + (n+1) H(+)(in) = a plastoquinol + NADP(+) + n H(+)(out). In terms of biological role, NDH-1 shuttles electrons from an unknown electron donor, via FMN and iron-sulfur (Fe-S) centers, to quinones in the respiratory and/or the photosynthetic chain. The immediate electron acceptor for the enzyme in this species is believed to be plastoquinone. Couples the redox reaction to proton translocation, and thus conserves the redox energy in a proton gradient. Cyanobacterial NDH-1 also plays a role in inorganic carbon-concentration. The polypeptide is NAD(P)H-quinone oxidoreductase subunit K (Nostoc sp. (strain PCC 7120 / SAG 25.82 / UTEX 2576)).